Reading from the N-terminus, the 579-residue chain is Probable zinc metalloprotease EGY1, chloroplastic (579 aa).

Disordered stretches follow at residues 1–42 (MAAA…PASA) and 78–146 (GGGG…NEPP). A chloroplast-targeting transit peptide spans 1–44 (MAAAAAALASSPMVHLTASRLRLPRPARSPAAATPSPSPASAAC). Over residues 16 to 42 (LTASRLRLPRPARSPAAATPSPSPASA) the composition is skewed to low complexity. Residues 78-92 (GGGGGGGGGGGGTGG) are compositionally biased toward gly residues. Low complexity-rich tracts occupy residues 104–115 (AAAAEAKVGGAV) and 125–137 (SGSF…SSSG). A run of 8 helical transmembrane segments spans residues 272-292 (YVIS…LGIA), 321-341 (LLPF…IQLF), 357-377 (LSIP…ITQF), 392-412 (MAGP…GLLL), 419-439 (ASDL…LGLV), 452-472 (ATVA…TTAF), 505-525 (LLGL…YVLI), and 547-567 (AALI…WDEL).

The protein belongs to the peptidase M50B family.

It localises to the plastid. It is found in the chloroplast membrane. Functionally, probable membrane-associated metalloprotease that may be involved in chloroplast development. In Oryza sativa subsp. japonica (Rice), this protein is Probable zinc metalloprotease EGY1, chloroplastic (EGY1).